The primary structure comprises 891 residues: Alanine--tRNA ligase (891 aa).

4 residues coordinate Zn(2+): H564, H568, C677, and H681.

The protein belongs to the class-II aminoacyl-tRNA synthetase family. Zn(2+) serves as cofactor.

The protein localises to the cytoplasm. It carries out the reaction tRNA(Ala) + L-alanine + ATP = L-alanyl-tRNA(Ala) + AMP + diphosphate. In terms of biological role, catalyzes the attachment of alanine to tRNA(Ala) in a two-step reaction: alanine is first activated by ATP to form Ala-AMP and then transferred to the acceptor end of tRNA(Ala). Also edits incorrectly charged Ser-tRNA(Ala) and Gly-tRNA(Ala) via its editing domain. The sequence is that of Alanine--tRNA ligase from Rhodopseudomonas palustris (strain HaA2).